The primary structure comprises 259 residues: Protein unc-50 homolog (259 aa).

Methionine 1 is subject to N-acetylmethionine. Over 1 to 82 (MLPSTSLSSS…TKDQWARDDP (82 aa)) the chain is Cytoplasmic. Serine 6 is modified (phosphoserine). Residues 83–103 (AFLVLLSIWLCVSTIGFGFVL) traverse the membrane as a helical segment. At 104 to 112 (DMGFFETIK) the chain is on the lumenal side. Residues 113 to 133 (LLLWVVFIDCVGVGLLISTLM) traverse the membrane as a helical segment. At 134–163 (WFVSNKYLVKRQSRDYDVEWGYAFDVHLNA) the chain is on the cytoplasmic side. A helical membrane pass occupies residues 164–184 (FYPLLVILHFIQLFFINHVIL). The Lumenal segment spans residues 185-187 (TDT). The chain crosses the membrane as a helical span at residues 188–208 (FIGYLVGNTLWLIAVGYYIYV). Residues 209–222 (TFLGYSALPFLKNT) are Cytoplasmic-facing. Residues 223–243 (VILLYPFAPLMVLYGLSLALG) form a helical membrane-spanning segment. Residues 244 to 259 (WNFTHTLCSFYKYRVK) are Lumenal-facing.

This sequence belongs to the unc-50 family. Highly expressed in periodontal ligament and bone marrow, but not in gingival fibroblasts.

The protein resides in the nucleus inner membrane. It is found in the golgi apparatus membrane. Its function is as follows. Involved in the cell surface expression of neuronal nicotinic receptors. Binds RNA. The polypeptide is Protein unc-50 homolog (Unc50) (Mus musculus (Mouse)).